The primary structure comprises 22 residues: Fuctinin-2 (22 aa).

The disordered stretch occupies residues 1-22; it reads ELPGLPKGEKEQQEAIEHIDEV. The span at 7–22 shows a compositional bias: basic and acidic residues; the sequence is KGEKEQQEAIEHIDEV.

It to human SET/PHAPII protein. Oligomer.

The protein resides in the cytoplasm. In terms of biological role, has a role in the physiological regulation of fucosylation processes. This is Fuctinin-2 from Rattus norvegicus (Rat).